A 264-amino-acid chain; its full sequence is MSGAADREAVFPTRQSLGIMKAKLKGAETGHSLLKRKSEALTKRFREITRRIDEAKRKMGRVMQIASLSLAEVTYAVGGNIGYQIQESAKSARFRIRAKQENVSGVLLPAFEAYQAEGNDDFAMTGLGKGGQQVQRCRETYARAVEALVELASLQTAFVILDEVIKVVNRRVNAIEHVIIPRTENTIKYINSELDELDREEFYRLKKVAAKKQRDNAETDAQMKAKKAEQQRLALADSENAEGEQTENTPADILAAEEDEDVIF.

The span at 214–230 (RDNAETDAQMKAKKAEQ) shows a compositional bias: basic and acidic residues. Residues 214-264 (RDNAETDAQMKAKKAEQQRLALADSENAEGEQTENTPADILAAEEDEDVIF) are disordered. Acidic residues predominate over residues 255–264 (AAEEDEDVIF).

The protein belongs to the V-ATPase D subunit family. In terms of assembly, V-ATPase is a heteromultimeric enzyme composed of a peripheral catalytic V1 complex (components A to H) attached to an integral membrane V0 proton pore complex (components: a, c, c', c'', d, e, f and VOA1).

It is found in the vacuole membrane. Functionally, subunit of the V1 complex of vacuolar(H+)-ATPase (V-ATPase), a multisubunit enzyme composed of a peripheral complex (V1) that hydrolyzes ATP and a membrane integral complex (V0) that translocates protons. V-ATPase is responsible for acidifying and maintaining the pH of intracellular compartments. The polypeptide is V-type proton ATPase subunit D (vma-8) (Neurospora crassa (strain ATCC 24698 / 74-OR23-1A / CBS 708.71 / DSM 1257 / FGSC 987)).